Reading from the N-terminus, the 731-residue chain is 1,4-alpha-glucan branching enzyme GlgB (731 aa).

Asp-409 functions as the Nucleophile in the catalytic mechanism. The Proton donor role is filled by Glu-462.

This sequence belongs to the glycosyl hydrolase 13 family. GlgB subfamily. As to quaternary structure, monomer.

It carries out the reaction Transfers a segment of a (1-&gt;4)-alpha-D-glucan chain to a primary hydroxy group in a similar glucan chain.. It participates in glycan biosynthesis; glycogen biosynthesis. Its function is as follows. Catalyzes the formation of the alpha-1,6-glucosidic linkages in glycogen by scission of a 1,4-alpha-linked oligosaccharide from growing alpha-1,4-glucan chains and the subsequent attachment of the oligosaccharide to the alpha-1,6 position. The sequence is that of 1,4-alpha-glucan branching enzyme GlgB from Roseobacter denitrificans (strain ATCC 33942 / OCh 114) (Erythrobacter sp. (strain OCh 114)).